The chain runs to 624 residues: Actin-related protein 8 (624 aa).

An N-acetylmethionine modification is found at Met-1. Residues 1–25 (MTQAEKGDAENGKEKGGEKEKEQRG) show a composition bias toward basic and acidic residues. Residues 1–29 (MTQAEKGDAENGKEKGGEKEKEQRGVKRP) are disordered. ATP is bound by residues Ser-55 and Thr-56. The residue at position 132 (Ser-132) is a Phosphoserine. An ATP-binding site is contributed by 283 to 286 (DVGD). Ser-412 is modified (phosphoserine). A disordered region spans residues 430 to 460 (SKQEQSAKATADRKSASKPIGFEGDLRGQSS).

The protein belongs to the actin family. ARP8 subfamily. Component of the chromatin remodeling INO80 complex; specifically part of a complex module associated with the DBINO domain of INO80. Exists as monomers and dimers, but the dimer is most probably the biologically relevant form required for stable interactions with histones that exploits the twofold symmetry of the nucleosome core.

Its subcellular location is the nucleus. The protein localises to the chromosome. Its function is as follows. Plays an important role in the functional organization of mitotic chromosomes. Exhibits low basal ATPase activity, and unable to polymerize. In terms of biological role, proposed core component of the chromatin remodeling INO80 complex which is involved in transcriptional regulation, DNA replication and probably DNA repair. Required for the recruitment of INO80 (and probably the INO80 complex) to sites of DNA damage Strongly prefer nucleosomes and H3-H4 tetramers over H2A-H2B dimers, suggesting it may act as a nucleosome recognition module within the complex. This is Actin-related protein 8 (ACTR8) from Ailuropoda melanoleuca (Giant panda).